Reading from the N-terminus, the 365-residue chain is tRNA-specific 2-thiouridylase MnmA (365 aa).

Residues 14–21 (AMSGGVDS) and Leu-40 contribute to the ATP site. Cys-108 acts as the Nucleophile in catalysis. A disulfide bond links Cys-108 and Cys-204. Gly-132 is a binding site for ATP. The segment at 154–156 (KDQ) is interaction with tRNA. Cys-204 (cysteine persulfide intermediate) is an active-site residue.

Belongs to the MnmA/TRMU family.

The protein resides in the cytoplasm. The enzyme catalyses S-sulfanyl-L-cysteinyl-[protein] + uridine(34) in tRNA + AH2 + ATP = 2-thiouridine(34) in tRNA + L-cysteinyl-[protein] + A + AMP + diphosphate + H(+). Functionally, catalyzes the 2-thiolation of uridine at the wobble position (U34) of tRNA, leading to the formation of s(2)U34. The polypeptide is tRNA-specific 2-thiouridylase MnmA (Rickettsia akari (strain Hartford)).